Here is a 427-residue protein sequence, read N- to C-terminus: Glutamate-1-semialdehyde 2,1-aminomutase 1 (427 aa).

Lysine 265 carries the N6-(pyridoxal phosphate)lysine modification.

This sequence belongs to the class-III pyridoxal-phosphate-dependent aminotransferase family. HemL subfamily. In terms of assembly, homodimer. It depends on pyridoxal 5'-phosphate as a cofactor.

Its subcellular location is the cytoplasm. It catalyses the reaction (S)-4-amino-5-oxopentanoate = 5-aminolevulinate. It functions in the pathway porphyrin-containing compound metabolism; protoporphyrin-IX biosynthesis; 5-aminolevulinate from L-glutamyl-tRNA(Glu): step 2/2. The protein is Glutamate-1-semialdehyde 2,1-aminomutase 1 of Lachnoclostridium phytofermentans (strain ATCC 700394 / DSM 18823 / ISDg) (Clostridium phytofermentans).